We begin with the raw amino-acid sequence, 338 residues long: 6-phosphogluconolactonase (338 aa).

Belongs to the cycloisomerase 2 family.

The catalysed reaction is 6-phospho-D-glucono-1,5-lactone + H2O = 6-phospho-D-gluconate + H(+). It participates in carbohydrate degradation; pentose phosphate pathway; D-ribulose 5-phosphate from D-glucose 6-phosphate (oxidative stage): step 2/3. Functionally, catalyzes the hydrolysis of 6-phosphogluconolactone to 6-phosphogluconate. In Blochmanniella floridana, this protein is 6-phosphogluconolactonase.